Here is a 393-residue protein sequence, read N- to C-terminus: GDP-mannose:cellobiosyl-diphosphopolyprenol alpha-mannosyltransferase (393 aa).

It belongs to the glycosyltransferase group 1 family. Glycosyltransferase 4 subfamily.

It carries out the reaction beta-D-Glc-(1-&gt;4)-alpha-D-Glc-di-trans,octa-cis-undecaprenyl diphosphate + GDP-alpha-D-mannose = alpha-D-Man-(1-&gt;3)-beta-D-Glc-(1-&gt;4)-alpha-D-Glc-1-di-trans,octa-cis-undecaprenyl diphosphate + GDP + H(+). Involved in the biosynthesis of the exopolysaccharide acetan, a water-soluble polysaccharide involved in production of bacterial cellulose (BC). The sequence is that of GDP-mannose:cellobiosyl-diphosphopolyprenol alpha-mannosyltransferase (aceC) from Komagataeibacter xylinus (Gluconacetobacter xylinus).